The following is a 116-amino-acid chain: Evasin P1180 (116 aa).

Positions 1 to 25 (MARNWSFRVIFVSAMWCALLKFATL) are cleaved as a signal peptide. 4 disulfides stabilise this stretch: C38-C58, C54-C95, C71-C100, and C90-C109. N-linked (GlcNAc...) asparagine glycans are attached at residues N45, N73, and N104.

It is found in the secreted. In terms of biological role, salivary chemokine-binding protein which binds to host chemokines CCL2, CCL3, CCL4, CCL8 and CCL18. This Amblyomma triste (Neotropical tick) protein is Evasin P1180.